The chain runs to 383 residues: Succinyl-diaminopimelate desuccinylase (383 aa).

Position 79 (His79) interacts with Zn(2+). Asp81 is an active-site residue. Asp110 serves as a coordination point for Zn(2+). Residue Glu141 is the Proton acceptor of the active site. Positions 142, 170, and 355 each coordinate Zn(2+).

It belongs to the peptidase M20A family. DapE subfamily. As to quaternary structure, homodimer. The cofactor is Zn(2+). Requires Co(2+) as cofactor.

The catalysed reaction is N-succinyl-(2S,6S)-2,6-diaminopimelate + H2O = (2S,6S)-2,6-diaminopimelate + succinate. The protein operates within amino-acid biosynthesis; L-lysine biosynthesis via DAP pathway; LL-2,6-diaminopimelate from (S)-tetrahydrodipicolinate (succinylase route): step 3/3. Functionally, catalyzes the hydrolysis of N-succinyl-L,L-diaminopimelic acid (SDAP), forming succinate and LL-2,6-diaminopimelate (DAP), an intermediate involved in the bacterial biosynthesis of lysine and meso-diaminopimelic acid, an essential component of bacterial cell walls. The chain is Succinyl-diaminopimelate desuccinylase from Helicobacter pylori (strain Shi470).